A 153-amino-acid chain; its full sequence is Protein-export protein SecB (153 aa).

It belongs to the SecB family. Homotetramer, a dimer of dimers. One homotetramer interacts with 1 SecA dimer.

It is found in the cytoplasm. Its function is as follows. One of the proteins required for the normal export of preproteins out of the cell cytoplasm. It is a molecular chaperone that binds to a subset of precursor proteins, maintaining them in a translocation-competent state. It also specifically binds to its receptor SecA. The polypeptide is Protein-export protein SecB (Edwardsiella ictaluri (strain 93-146)).